The sequence spans 518 residues: Chaperonin GroEL (518 aa).

Residues 30–33, K51, 87–91, and G415 contribute to the ATP site; these read TLGP and DGTTT.

It belongs to the chaperonin (HSP60) family. As to quaternary structure, forms a cylinder of 14 subunits composed of two heptameric rings stacked back-to-back. Interacts with the co-chaperonin GroES.

It is found in the cytoplasm. The enzyme catalyses ATP + H2O + a folded polypeptide = ADP + phosphate + an unfolded polypeptide.. In terms of biological role, together with its co-chaperonin GroES, plays an essential role in assisting protein folding. The GroEL-GroES system forms a nano-cage that allows encapsulation of the non-native substrate proteins and provides a physical environment optimized to promote and accelerate protein folding. This is Chaperonin GroEL from Desulfotalea psychrophila (strain LSv54 / DSM 12343).